A 193-amino-acid polypeptide reads, in one-letter code: Non-canonical purine NTP pyrophosphatase homolog (193 aa).

Belongs to the HAM1 NTPase family.

The protein is Non-canonical purine NTP pyrophosphatase homolog of Halalkalibacterium halodurans (strain ATCC BAA-125 / DSM 18197 / FERM 7344 / JCM 9153 / C-125) (Bacillus halodurans).